The chain runs to 257 residues: NAD-capped RNA hydrolase NudC (257 aa).

Substrate is bound at residue arginine 69. Zn(2+) is bound by residues cysteine 98 and cysteine 101. Position 111 (glutamate 111) interacts with substrate. Zn(2+) is bound by residues cysteine 116 and cysteine 119. Tyrosine 124 lines the substrate pocket. Residues 125–248 enclose the Nudix hydrolase domain; sequence PQIAPCIIVA…TVARRLIEDT (124 aa). Positions 158, 174, and 178 each coordinate a divalent metal cation. Positions 159–180 match the Nudix box motif; that stretch reads GFVEVGETLEQAVAREVMEESG. 192-199 serves as a coordination point for substrate; the sequence is QPWPFPQS. Glutamate 219 contacts a divalent metal cation. Alanine 241 serves as a coordination point for substrate.

It belongs to the Nudix hydrolase family. NudC subfamily. In terms of assembly, homodimer. It depends on Mg(2+) as a cofactor. Mn(2+) is required as a cofactor. Zn(2+) serves as cofactor.

It carries out the reaction a 5'-end NAD(+)-phospho-ribonucleoside in mRNA + H2O = a 5'-end phospho-adenosine-phospho-ribonucleoside in mRNA + beta-nicotinamide D-ribonucleotide + 2 H(+). The catalysed reaction is NAD(+) + H2O = beta-nicotinamide D-ribonucleotide + AMP + 2 H(+). It catalyses the reaction NADH + H2O = reduced beta-nicotinamide D-ribonucleotide + AMP + 2 H(+). Functionally, mRNA decapping enzyme that specifically removes the nicotinamide adenine dinucleotide (NAD) cap from a subset of mRNAs by hydrolyzing the diphosphate linkage to produce nicotinamide mononucleotide (NMN) and 5' monophosphate mRNA. The NAD-cap is present at the 5'-end of some mRNAs and stabilizes RNA against 5'-processing. Has preference for mRNAs with a 5'-end purine. Catalyzes the hydrolysis of a broad range of dinucleotide pyrophosphates. The protein is NAD-capped RNA hydrolase NudC of Salmonella choleraesuis (strain SC-B67).